A 468-amino-acid chain; its full sequence is Kynureninase 2 (468 aa).

Pyridoxal 5'-phosphate is bound by residues Leu-134, Thr-135, 162–165 (FPSD), Asp-247, His-250, and Tyr-272. Lys-273 is modified (N6-(pyridoxal phosphate)lysine). Trp-312 and Asn-340 together coordinate pyridoxal 5'-phosphate.

The protein belongs to the kynureninase family. In terms of assembly, homodimer. Pyridoxal 5'-phosphate is required as a cofactor.

The protein localises to the cytoplasm. The enzyme catalyses L-kynurenine + H2O = anthranilate + L-alanine + H(+). It catalyses the reaction 3-hydroxy-L-kynurenine + H2O = 3-hydroxyanthranilate + L-alanine + H(+). It functions in the pathway amino-acid degradation; L-kynurenine degradation; L-alanine and anthranilate from L-kynurenine: step 1/1. It participates in cofactor biosynthesis; NAD(+) biosynthesis; quinolinate from L-kynurenine: step 2/3. Functionally, catalyzes the cleavage of L-kynurenine (L-Kyn) and L-3-hydroxykynurenine (L-3OHKyn) into anthranilic acid (AA) and 3-hydroxyanthranilic acid (3-OHAA), respectively. The chain is Kynureninase 2 (bna5-2) from Aspergillus oryzae (strain ATCC 42149 / RIB 40) (Yellow koji mold).